A 284-amino-acid polypeptide reads, in one-letter code: Bifunctional protein FolD (284 aa).

NADP(+) is bound by residues 164 to 166 (GRS) and Ser-189.

This sequence belongs to the tetrahydrofolate dehydrogenase/cyclohydrolase family. Homodimer.

It catalyses the reaction (6R)-5,10-methylene-5,6,7,8-tetrahydrofolate + NADP(+) = (6R)-5,10-methenyltetrahydrofolate + NADPH. It carries out the reaction (6R)-5,10-methenyltetrahydrofolate + H2O = (6R)-10-formyltetrahydrofolate + H(+). It functions in the pathway one-carbon metabolism; tetrahydrofolate interconversion. Catalyzes the oxidation of 5,10-methylenetetrahydrofolate to 5,10-methenyltetrahydrofolate and then the hydrolysis of 5,10-methenyltetrahydrofolate to 10-formyltetrahydrofolate. The polypeptide is Bifunctional protein FolD (Listeria monocytogenes serotype 4b (strain F2365)).